The primary structure comprises 216 residues: Dimethylamine corrinoid protein 1 (216 aa).

The region spanning 1–91 (MTSKEELLQE…DMPAGTETKK (91 aa)) is the B12-binding N-terminal domain. The region spanning 92-216 (LGVIVNGTVE…AKAKELLVGK (125 aa)) is the B12-binding domain. His105 lines the methylcob(III)alamin pocket.

It belongs to the methylamine corrinoid protein family.

It participates in one-carbon metabolism; methanogenesis from dimethylamine. Acts as a methyl group carrier between MtbB and MtbA. This Methanosarcina mazei (strain ATCC BAA-159 / DSM 3647 / Goe1 / Go1 / JCM 11833 / OCM 88) (Methanosarcina frisia) protein is Dimethylamine corrinoid protein 1 (mtbC1).